The primary structure comprises 331 residues: Biotin synthase (331 aa).

Residues 48–278 form the Radical SAM core domain; sequence FDSQKFEFCS…SAELRLCGGR (231 aa). [4Fe-4S] cluster contacts are provided by cysteine 66, cysteine 70, and cysteine 73. Cysteine 110, cysteine 143, cysteine 203, and arginine 273 together coordinate [2Fe-2S] cluster.

It belongs to the radical SAM superfamily. Biotin synthase family. In terms of assembly, homodimer. It depends on [4Fe-4S] cluster as a cofactor. [2Fe-2S] cluster is required as a cofactor.

The catalysed reaction is (4R,5S)-dethiobiotin + (sulfur carrier)-SH + 2 reduced [2Fe-2S]-[ferredoxin] + 2 S-adenosyl-L-methionine = (sulfur carrier)-H + biotin + 2 5'-deoxyadenosine + 2 L-methionine + 2 oxidized [2Fe-2S]-[ferredoxin]. It functions in the pathway cofactor biosynthesis; biotin biosynthesis; biotin from 7,8-diaminononanoate: step 2/2. Functionally, catalyzes the conversion of dethiobiotin (DTB) to biotin by the insertion of a sulfur atom into dethiobiotin via a radical-based mechanism. This Hydrogenobaculum sp. (strain Y04AAS1) protein is Biotin synthase.